The chain runs to 467 residues: Probable citrate synthase 1, mitochondrial (467 aa).

Catalysis depends on residues histidine 303, histidine 349, and aspartate 404.

It belongs to the citrate synthase family. As to quaternary structure, homodimer.

The protein localises to the mitochondrion matrix. It catalyses the reaction oxaloacetate + acetyl-CoA + H2O = citrate + CoA + H(+). It functions in the pathway carbohydrate metabolism; tricarboxylic acid cycle; isocitrate from oxaloacetate: step 1/2. This Aedes aegypti (Yellowfever mosquito) protein is Probable citrate synthase 1, mitochondrial.